Here is a 1290-residue protein sequence, read N- to C-terminus: Alpha-factor-transporting ATPase (1290 aa).

Residues 1-25 (MNFLSFKTTKHYHIFRYVNIRNDYR) are Cytoplasmic-facing. A helical membrane pass occupies residues 26–46 (LLMIMIIGTVATGLVPAITSI). In terms of domain architecture, ABC transmembrane type-1 1 spans 27 to 319 (LMIMIIGTVA…TLHQIVVLQK (293 aa)). Over 47–75 (LTGRVFDLLSVFVANGSHQGLYSQLVQRS) the chain is Extracellular. The N-linked (GlcNAc...) asparagine glycan is linked to N61. Residues 76-96 (MAVMALGAASVPVMWLSLTSW) form a helical membrane-spanning segment. Residues 97 to 150 (MHIGERQGFRIRSQILEAYLEEKPMEWYDNNEKLLGDFTQINRCVEELRSSSAE) are Cytoplasmic-facing. The chain crosses the membrane as a helical span at residues 151–171 (ASAITFQNLVAICALLGTSFY). Residues 172–173 (YS) lie on the Extracellular side of the membrane. The chain crosses the membrane as a helical span at residues 174-194 (WSLTLIILCSSPIITFFAVVF). At 195-262 (SRMIHVYSEK…SCFFVAANAG (68 aa)) the chain is on the cytoplasmic side. A helical membrane pass occupies residues 263–283 (ILRFLTLTMFVQGFWFGSAMI). Over 284–296 (KKGKLNINDVITC) the chain is Extracellular. Residues 297–317 (FHSCIMLGSTLNNTLHQIVVL) form a helical membrane-spanning segment. Topologically, residues 318 to 715 (QKGGVAMEKI…RMIKSIRYKK (398 aa)) are cytoplasmic. One can recognise an ABC transporter 1 domain in the interval 357–603 (LTFANVSFSY…PTTTFSTWYH (247 aa)). 392–399 (GKSGSGKS) is a binding site for ATP. The helical transmembrane segment at 716–736 (ILILGLLCSLIAGATNPVFSY) threads the bilayer. The region spanning 717 to 1007 (LILGLLCSLI…LVSQIPDISR (291 aa)) is the ABC transmembrane type-1 2 domain. Residues 737 to 763 (TFSFLLEGIVPSTDGKTGSSHYLAKWS) lie on the Extracellular side of the membrane. The chain crosses the membrane as a helical span at residues 764–784 (LLVLGVAAADGIFNFAKGFLL). Residues 785 to 838 (DCCSEYWVMDLRNEVMEKLTRKNMDWFSGENNKASEISALVLNDLRDLRSLVSE) are Cytoplasmic-facing. The helical transmembrane segment at 839–859 (FLSAMTSFVTVSTIGLIWALV) threads the bilayer. Topologically, residues 860 to 865 (SGWKLS) are extracellular. A helical transmembrane segment spans residues 866-886 (LVCISMFPLIIIFSAIYGGIL). Residues 887 to 945 (QKCETDYKTSVAQLENCLYQIVTNIKTIKCLQAEFHFQLTYHDLKIKMQQIASKRAIAT) are Cytoplasmic-facing. Residues 946–966 (GFGISMTNMIVMCIQAIIYYY) form a helical membrane-spanning segment. The Extracellular portion of the chain corresponds to 967–981 (GLKLVMIHEYTSKEM). A helical membrane pass occupies residues 982 to 1002 (FTTFTLLLFTIMSCTSLVSQI). Topologically, residues 1003–1290 (PDISRGQRAA…LFQIVSNQSS (288 aa)) are cytoplasmic. Residue K1022 forms a Glycyl lysine isopeptide (Lys-Gly) (interchain with G-Cter in ubiquitin) linkage. One can recognise an ABC transporter 2 domain in the interval 1052-1287 (VSIQNLTFAY…RGELFQIVSN (236 aa)). 1087 to 1094 (GESGTGKS) serves as a coordination point for ATP.

This sequence belongs to the ABC transporter superfamily. Alpha-factor sex pheromone exporter (TC 3.A.1.206) family. Degraded via the ubiquitin system.

The protein resides in the membrane. The catalysed reaction is an [alpha-factor](in) + ATP + H2O = an [alpha-factor](out) + ADP + phosphate + H(+). STE6 is required in yeast MATA cells for production of A-factor pheromone. STE6 is involved in the transport of the farnesyl-derivation of the A-factor pheromone. In Saccharomyces cerevisiae (strain ATCC 204508 / S288c) (Baker's yeast), this protein is Alpha-factor-transporting ATPase (STE6).